Consider the following 322-residue polypeptide: Lipoyl synthase (322 aa).

The span at Met-1 to Thr-14 shows a compositional bias: polar residues. Residues Met-1–Val-30 are disordered. The segment covering Pro-15 to Ser-26 has biased composition (basic and acidic residues). [4Fe-4S] cluster-binding residues include Cys-70, Cys-75, Cys-81, Cys-96, Cys-100, Cys-103, and Ser-310. Residues Phe-82–Ala-299 enclose the Radical SAM core domain.

Belongs to the radical SAM superfamily. Lipoyl synthase family. [4Fe-4S] cluster is required as a cofactor.

The protein resides in the cytoplasm. It catalyses the reaction [[Fe-S] cluster scaffold protein carrying a second [4Fe-4S](2+) cluster] + N(6)-octanoyl-L-lysyl-[protein] + 2 oxidized [2Fe-2S]-[ferredoxin] + 2 S-adenosyl-L-methionine + 4 H(+) = [[Fe-S] cluster scaffold protein] + N(6)-[(R)-dihydrolipoyl]-L-lysyl-[protein] + 4 Fe(3+) + 2 hydrogen sulfide + 2 5'-deoxyadenosine + 2 L-methionine + 2 reduced [2Fe-2S]-[ferredoxin]. It participates in protein modification; protein lipoylation via endogenous pathway; protein N(6)-(lipoyl)lysine from octanoyl-[acyl-carrier-protein]: step 2/2. In terms of biological role, catalyzes the radical-mediated insertion of two sulfur atoms into the C-6 and C-8 positions of the octanoyl moiety bound to the lipoyl domains of lipoate-dependent enzymes, thereby converting the octanoylated domains into lipoylated derivatives. This Methylococcus capsulatus (strain ATCC 33009 / NCIMB 11132 / Bath) protein is Lipoyl synthase.